The following is a 388-amino-acid chain: Succinate--CoA ligase [ADP-forming] subunit beta (388 aa).

Residues 9 to 244 (KQLFSRYGLP…PSQEDPREAQ (236 aa)) enclose the ATP-grasp domain. Residues lysine 46, 53 to 55 (GRG), glutamate 99, threonine 102, and glutamate 107 contribute to the ATP site. Residues asparagine 199 and aspartate 213 each contribute to the Mg(2+) site. Substrate contacts are provided by residues asparagine 264 and 321-323 (GIV).

The protein belongs to the succinate/malate CoA ligase beta subunit family. In terms of assembly, heterotetramer of two alpha and two beta subunits. Mg(2+) serves as cofactor.

It catalyses the reaction succinate + ATP + CoA = succinyl-CoA + ADP + phosphate. It carries out the reaction GTP + succinate + CoA = succinyl-CoA + GDP + phosphate. It participates in carbohydrate metabolism; tricarboxylic acid cycle; succinate from succinyl-CoA (ligase route): step 1/1. Succinyl-CoA synthetase functions in the citric acid cycle (TCA), coupling the hydrolysis of succinyl-CoA to the synthesis of either ATP or GTP and thus represents the only step of substrate-level phosphorylation in the TCA. The beta subunit provides nucleotide specificity of the enzyme and binds the substrate succinate, while the binding sites for coenzyme A and phosphate are found in the alpha subunit. The sequence is that of Succinate--CoA ligase [ADP-forming] subunit beta from Proteus mirabilis (strain HI4320).